The following is a 464-amino-acid chain: UDP-N-acetylmuramate--L-alanine ligase (464 aa).

115–121 lines the ATP pocket; the sequence is GSHGKTT.

This sequence belongs to the MurCDEF family.

It localises to the cytoplasm. It catalyses the reaction UDP-N-acetyl-alpha-D-muramate + L-alanine + ATP = UDP-N-acetyl-alpha-D-muramoyl-L-alanine + ADP + phosphate + H(+). Its pathway is cell wall biogenesis; peptidoglycan biosynthesis. Functionally, cell wall formation. The polypeptide is UDP-N-acetylmuramate--L-alanine ligase (Pelagibacter ubique (strain HTCC1062)).